Here is a 457-residue protein sequence, read N- to C-terminus: Multidrug resistance protein MdtK (457 aa).

Transmembrane regions (helical) follow at residues 11–31, 53–73, 93–113, 127–147, 160–180, 188–208, 243–263, 280–300, 316–336, 357–377, 387–407, and 418–438; these read LLALGIPVIIAQFSQTAMGVV, IWLPVILFGYGLLLALTPIIA, WLAIFLSIIIIAILYNSKFLI, AVGFIHAIMWGAPGYLFYQVL, GMVISFLGLLINIPINYIFIY, LGGVGCGVATASVYWVMFLLM, LPIAMAVFFEITLFAIVALLI, FSSLMFMFPISLAAATTIRVG, YTGIMVGLVFACLTATFSIIL, LMLFAALYQLSDAIQVVGAGV, IFYITFIAFWILGLPSGYILG, and PQGFWIGFIIGLTASAVMIFA.

The protein belongs to the multi antimicrobial extrusion (MATE) (TC 2.A.66.1) family. MdtK subfamily.

Its subcellular location is the cell inner membrane. In terms of biological role, multidrug efflux pump that functions probably as a Na(+)/drug antiporter. This is Multidrug resistance protein MdtK from Photorhabdus laumondii subsp. laumondii (strain DSM 15139 / CIP 105565 / TT01) (Photorhabdus luminescens subsp. laumondii).